Reading from the N-terminus, the 376-residue chain is Alcohol dehydrogenase class-3 (376 aa).

Alanine 1 bears the N-acetylalanine mark. Cysteine 47, histidine 69, cysteine 99, cysteine 102, cysteine 105, cysteine 113, and cysteine 176 together coordinate Zn(2+).

The protein belongs to the zinc-containing alcohol dehydrogenase family. Class-III subfamily. Homodimer. Zn(2+) serves as cofactor.

It is found in the cytoplasm. It carries out the reaction a primary alcohol + NAD(+) = an aldehyde + NADH + H(+). It catalyses the reaction a secondary alcohol + NAD(+) = a ketone + NADH + H(+). The enzyme catalyses S-(hydroxymethyl)glutathione + NADP(+) = S-formylglutathione + NADPH + H(+). The catalysed reaction is S-(hydroxymethyl)glutathione + NAD(+) = S-formylglutathione + NADH + H(+). It carries out the reaction S-nitrosoglutathione + NADH + H(+) = S-(hydroxysulfenamide)glutathione + NAD(+). Functionally, class-III ADH is remarkably ineffective in oxidizing ethanol, but it readily catalyzes the oxidation of long-chain primary alcohols and the oxidation of S-(hydroxymethyl) glutathione. Also acts as a S-nitroso-glutathione reductase by catalyzing the NADH-dependent reduction of S-nitrosoglutathione, thereby regulating protein S-nitrosylation. The chain is Alcohol dehydrogenase class-3 from Scyliorhinus canicula (Small-spotted catshark).